The following is a 331-amino-acid chain: Olfactory receptor 7D11 (331 aa).

Topologically, residues 1 to 25 (MEIENHTLITKFLILGLSDDPELQP) are extracellular. Residue Asn5 is glycosylated (N-linked (GlcNAc...) asparagine). Residues 26–46 (ILFGLFLSMYLVTLLGNLLII) form a helical membrane-spanning segment. Residues 47-57 (LAVSSDSHLHK) lie on the Cytoplasmic side of the membrane. The helical transmembrane segment at 58-78 (PMYFLLSNLSFIDICFISTTI) threads the bilayer. Residues 79–97 (PKMLVNMQSQIKDISYIEC) lie on the Extracellular side of the membrane. Cys97 and Cys179 are oxidised to a cystine. Residues 98–118 (LTQVFFFNIFAGMDNFLLTLM) traverse the membrane as a helical segment. Residues 119–142 (AYDRFVAICHPLNYTVIMNPRLCA) lie on the Cytoplasmic side of the membrane. The chain crosses the membrane as a helical span at residues 143–163 (LLILMFWIIMFWVSLIHVLLM). Residues 164–196 (NELNFSRGTEIPHFFCELAQVLKVSNSDNHVNN) are Extracellular-facing. N-linked (GlcNAc...) asparagine glycosylation occurs at Asn167. A helical membrane pass occupies residues 197 to 217 (VFMYVVTSLLGVIPMTGILMS). At 218 to 244 (YSQIFSSLFRMSSTVSKYKAFSTCGSH) the chain is on the cytoplasmic side. A helical transmembrane segment spans residues 245–265 (LCVVTLFYGSGFGVYFSSSVV). Residues 266 to 271 (HSTQRR) lie on the Extracellular side of the membrane. Residues 272-292 (KVASLMYTVISPMLNPFIYTL) traverse the membrane as a helical segment. The Cytoplasmic segment spans residues 293-331 (RNKDVKGALGKLFNRVASSPSCINDIRNKLLLRSVRQIL).

Belongs to the G-protein coupled receptor 1 family.

It localises to the cell membrane. Its function is as follows. Possible olfactory or taste receptor. The chain is Olfactory receptor 7D11 from Mus musculus (Mouse).